A 284-amino-acid polypeptide reads, in one-letter code: Nucleotide-binding protein Sbal_3671 (284 aa).

8 to 15 provides a ligand contact to ATP; sequence GRSGSGKS. Residue 56-59 coordinates GTP; it reads DVRN.

It belongs to the RapZ-like family.

Its function is as follows. Displays ATPase and GTPase activities. This Shewanella baltica (strain OS155 / ATCC BAA-1091) protein is Nucleotide-binding protein Sbal_3671.